The chain runs to 244 residues: Lipid A 1-phosphatase (244 aa).

The next 6 helical transmembrane spans lie at 28–48 (LFVT…PIGA), 60–80 (ELLT…LLFF), 98–118 (ALYV…SGLL), 154–174 (FPSG…LLFP), 178–198 (VAFI…GAHY), and 201–221 (DVIA…IVFA).

Belongs to the lipid A LpxE 1-phosphatase family.

Its subcellular location is the cell inner membrane. Its pathway is bacterial outer membrane biogenesis; LPS lipid A biosynthesis. Its function is as follows. Removes the 1-phosphate group from (tetraacyl) lipid A species, has no requirement for the Kdo(2) moiety of lipid A. Has no 4'-phosphatase activity. Reduces sensitivity of S.meliloti strain 1021 to the cationic antimicrobial peptide (CAMP) polymyxin B. This chain is Lipid A 1-phosphatase, found in Rhizobium johnstonii (strain DSM 114642 / LMG 32736 / 3841) (Rhizobium leguminosarum bv. viciae).